A 375-amino-acid chain; its full sequence is Actin-binding Rho-activating protein (375 aa).

Composition is skewed to basic and acidic residues over residues 1–11 and 79–99; these read MAPGEREREAG and KPDR…SHIK. 2 disordered regions span residues 1 to 20 and 38 to 99; these read MAPG…LRKV and NENS…SHIK. Phosphoserine is present on residues S150 and S182. Residues 173-182 are compositionally biased toward basic and acidic residues; the sequence is QEEPTWKSDS. A disordered region spans residues 173–204; that stretch reads QEEPTWKSDSVDTEDSGYGGDMEERPEQDAAP. Actin-binding regions lie at residues 193–293 and 294–375; these read DMEE…AERA and KRAE…TLLE. Interaction with actin stretches follow at residues 234-279 and 346-375; these read SQVD…GDEG and MRAR…TLLE.

Binds F-actin and ABLIM1, ABLIM2 and ABLIM3. Interaction with ABLIM2 and ABLIM3 enhances activity. In terms of tissue distribution, expressed specifically in heart and skeletal muscle.

Its subcellular location is the cytoplasm. The protein resides in the myofibril. The protein localises to the sarcomere. It is found in the cytoskeleton. Functionally, acts as an activator of serum response factor (SRF)-dependent transcription possibly by inducing nuclear translocation of MKL1 or MKL2 and through a mechanism requiring Rho-actin signaling. This Mus musculus (Mouse) protein is Actin-binding Rho-activating protein.